The chain runs to 2084 residues: MAP kinase-activating death domain protein (2084 aa).

The uDENN domain occupies 25 to 352 (TPPMPKGLQG…VPVPGSTRVE (328 aa)). Residues 117-253 (PSSAAGSAGA…SPRASRKRTK (137 aa)) are disordered. Residues 118 to 131 (SSAAGSAGAGNDRP) show a composition bias toward low complexity. Positions 132–152 (GNGGPGGHGGGAGGGAGGGGR) are enriched in gly residues. The span at 160–173 (FRRESWRKSMERSS) shows a compositional bias: basic and acidic residues. Residues 174–183 (DSAFSSDYRS) are compositionally biased toward low complexity. The span at 189–204 (DSDRELTSRRDSDQQR) shows a compositional bias: basic and acidic residues. A compositionally biased stretch (basic residues) spans 205–215 (LHSHHSHHQPH). Over residues 234-245 (DSESGGSHSPSP) the composition is skewed to polar residues. Residues 373 to 514 (RFSLVDFPLH…EGTILKNHLK (142 aa)) enclose the cDENN domain. In terms of domain architecture, dDENN spans 516 to 678 (ALTSMTATNT…EWSLTPTNVA (163 aa)). Disordered regions lie at residues 557–588 (TPPH…NSPA), 730–749 (QPTD…SSSY), 811–863 (VASK…TVGS), 891–963 (QESD…SQSS), 1058–1092 (HSAG…GNNF), 1115–1188 (FGKK…AENQ), and 1305–1382 (SSSL…GQST). The segment covering 558 to 588 (PPHSAQASQRNSMSAQGTISSRQPSPMNSPA) has biased composition (polar residues). Residues 824-839 (SPVSSSSSRSDLSSPS) show a composition bias toward low complexity. Residues 913–925 (HPSDSESRPEKKI) are compositionally biased toward basic and acidic residues. Residues 946 to 963 (GSSGSSSSSPGRQSSQSS) show a composition bias toward low complexity. The segment covering 1121–1131 (QKQVPVQQKQP) has biased composition (low complexity). The span at 1168–1183 (TQEELTRQQNQERSHS) shows a compositional bias: basic and acidic residues. Positions 1305–1315 (SSSLLSSHAAS) are enriched in low complexity. Composition is skewed to polar residues over residues 1324-1353 (RSPS…STQL) and 1370-1382 (RLSS…GQST). Residues 1490 to 1565 (GMDQGPIEMM…GLVYSQEVHN (76 aa)) enclose the Death domain. Residues 1794–1842 (DIHAQQKQKHQQQQQHQQPQQQQQPHQTTTQQNQPTAVASAVPTTTAPA) show a composition bias toward low complexity. Disordered regions lie at residues 1794-1865 (DIHA…RHTV) and 1896-2084 (VPVP…HRKH). Positions 1845-1858 (VNPNRMTAKSQAGS) are enriched in polar residues. Positions 1896–1907 (VPVPPTPAPPTS) are enriched in pro residues. A compositionally biased stretch (polar residues) spans 1921–1932 (SQPSTESLASIS). Pro residues-rich tracts occupy residues 1933–1953 (SPPP…PAIP) and 1983–1993 (QYTPQPPPPFV). 2 stretches are compositionally biased toward low complexity: residues 2001-2029 (LARA…HSQS) and 2059-2077 (ISGS…ASAS).

It belongs to the MADD family.

The protein localises to the cell membrane. The protein resides in the cytoplasm. Its function is as follows. Guanyl-nucleotide exchange factor that regulates small GTPases. Converts GDP-bound inactive form of Rab3 to the GTP-bound active forms. The protein is MAP kinase-activating death domain protein of Drosophila melanogaster (Fruit fly).